The following is a 1052-amino-acid chain: MAAVTFASAITNAITNKTTSTGMVQFGSFPPMPLRSTTVTTVATPVGQPKLYTVRFGSLDPVIVKGGAGSLAKATRQQPSVEIDVSLSEAAALEVAKPKSSAVLRMHEEANKERALFLDWEASLKRRSYGIAENEKVVMTTRGVSKIVPRSSRAMKQKRARERRRAQQPIILKWEPKLSGFSIGGGFSASAIEAEEVRTKWPLHKTPSMKKRMVHKTCKMSDQGVDMLIRSLVKIFKAKSANIEYIGKKPIKVDFIRKERTKFARIQVAHLLGKRAQRDLLAGMEENHFIDILSEYSGNGTTINPGVVCAGWSGIVVRNETLTQKRSRSPSKAFVIRGEHEDKLYDARIKITKTMSLKIVHFSARGANFWKGFDRCFLAYRSDNREHTCYSGLDVTECGEVAALMCLAMFPCGKITCPDCVIDSELSQGQASGPSMKHRLTQLRDVIKSSYPRFKHAVQILDRYEQSLSSANENYQDFAEIQSISDGVEKAAFPHVNKLNAILIKGATATGEEFSQATKHLLEIARYLKNRTENIEKGSLKSFRNKVSQKAHINPTLMCDNQLDKNGNFIWGERGYHAKRFFSNYFEIIDPKKGYTQYETRVVPNGSRKLAIGKLIVPTNFEVLREQMRGEPVEPYPVTVECVSKSQGDFVHACCCVTTESGDPVLSEIKMPTKHHLVIGNSGDPKYIDLPEIEENKMYIAKEGYCYINIFLAMLVNVKESQAKEFTKVVRDKLVSELGKWPTLLDVATACYFLKVFYPDVANAELPRMLVDHKTKIIHVVDSYGSLSTGYHVLKTNTVEQLIKFTRCNLESSLKHYRVGGTEWENAHGADNIDNPQWCIKRLVKGVYRPKQLKEDMLANPFLPLYALLSPGVILAFYNSGSLEHLMNHYISADSNVAVLLVVLKSLAKKVSTSQSVLAQLQIIERSLPELIEAKANINGPDDAATRACNRFMGMLLHMAEPNYELANGGYTFLRDHSISILEKKLSADLGRGMERVKLVGALCYKILPVKASNLYTERFANAKRSRFRRQIQRVGHILLRVEQTASKRSER.

The Peptidase S30 domain occupies 219 to 362 (KMSDQGVDML…KTMSLKIVHF (144 aa)). Residues H270, D279, and S313 each act as for P1 proteinase activity in the active site. The Involved in interaction with stylet and aphid transmission signature appears at 414–417 (KITC). An Involved in virions binding and aphid transmission motif is present at residues 672–674 (PTK). The Peptidase C6 domain occupies 698-820 (MYIAKEGYCY…ESSLKHYRVG (123 aa)). Catalysis depends on for helper component proteinase activity residues C706 and H779.

The protein belongs to the potyviridae P3N-PIPO polyprotein family. As to quaternary structure, interacts (via PIPO domain) with host PCaP1 protein; this interaction may help to anchor the movement complex to the plasma membrane from which the complex could move to the plasmodesmata. Post-translationally, potyviral RNA is expressed as two polyproteins which undergo post-translational proteolytic processing. Genome polyprotein is processed by NIa-pro, P1 and HC-pro proteinases resulting in the production of at least ten individual proteins. P3N-PIPO is cleaved by P1 and HC-pro proteinases resulting in the production of three individual proteins. The P1 proteinase and the HC-pro cleave only their respective C-termini autocatalytically.

It is found in the host cell junction. The protein localises to the host plasmodesma. The enzyme catalyses Hydrolyzes a Gly-|-Gly bond at its own C-terminus, commonly in the sequence -Tyr-Xaa-Val-Gly-|-Gly, in the processing of the potyviral polyprotein.. Its function is as follows. Required for aphid transmission and also has proteolytic activity. Only cleaves a Gly-Gly dipeptide at its own C-terminus. Interacts with virions and aphid stylets. Acts as a suppressor of RNA-mediated gene silencing, also known as post-transcriptional gene silencing (PTGS), a mechanism of plant viral defense that limits the accumulation of viral RNAs. May have RNA-binding activity. In terms of biological role, allows efficient cell to cell propagation, by bypassing the host cell wall barrier. Transports viral genome to neighboring plant cells directly through plasmosdesmata, without any budding. The protein is P3N-PIPO polyprotein of Turnip mosaic virus (strain Quebec) (TuMV).